The following is a 422-amino-acid chain: ATP-dependent RNA helicase RhlB (422 aa).

A Q motif motif is present at residues 9-37 (QKFSDFALHPLVIKAIENQGFYHCTPIQA). The 180-residue stretch at 40-219 (FPITLAGRDV…FEQMNHPEYI (180 aa)) folds into the Helicase ATP-binding domain. Residue 53-60 (AQTGTGKT) coordinates ATP. Positions 165 to 168 (DEAD) match the DEAD box motif. The region spanning 245 to 390 (RLLQTLIEEE…TSEYNKEALL (146 aa)) is the Helicase C-terminal domain. A disordered region spans residues 394-422 (PQPKRLQRHHRHYAGSRNQGASRKPRSPQ). The segment covering 398–407 (RLQRHHRHYA) has biased composition (basic residues).

The protein belongs to the DEAD box helicase family. RhlB subfamily. As to quaternary structure, component of the RNA degradosome, which is a multiprotein complex involved in RNA processing and mRNA degradation.

The protein resides in the cytoplasm. It carries out the reaction ATP + H2O = ADP + phosphate + H(+). Its function is as follows. DEAD-box RNA helicase involved in RNA degradation. Has RNA-dependent ATPase activity and unwinds double-stranded RNA. In Hamiltonella defensa subsp. Acyrthosiphon pisum (strain 5AT), this protein is ATP-dependent RNA helicase RhlB.